Here is a 249-residue protein sequence, read N- to C-terminus: 1-(5-phosphoribosyl)-5-[(5-phosphoribosylamino)methylideneamino] imidazole-4-carboxamide isomerase (249 aa).

Asp10 acts as the Proton acceptor in catalysis. Catalysis depends on Asp136, which acts as the Proton donor.

Belongs to the HisA/HisF family.

The protein resides in the cytoplasm. It carries out the reaction 1-(5-phospho-beta-D-ribosyl)-5-[(5-phospho-beta-D-ribosylamino)methylideneamino]imidazole-4-carboxamide = 5-[(5-phospho-1-deoxy-D-ribulos-1-ylimino)methylamino]-1-(5-phospho-beta-D-ribosyl)imidazole-4-carboxamide. The protein operates within amino-acid biosynthesis; L-histidine biosynthesis; L-histidine from 5-phospho-alpha-D-ribose 1-diphosphate: step 4/9. The sequence is that of 1-(5-phosphoribosyl)-5-[(5-phosphoribosylamino)methylideneamino] imidazole-4-carboxamide isomerase from Symbiobacterium thermophilum (strain DSM 24528 / JCM 14929 / IAM 14863 / T).